We begin with the raw amino-acid sequence, 825 residues long: Putative pentatricopeptide repeat-containing protein At2g01510 (825 aa).

PPR repeat units follow at residues 47–77, 78–108, 109–143, 146–180, 183–213, 214–248, 249–283, 284–314, 315–349, 350–384, 385–415, 416–450, 451–485, 486–516, 517–551, 552–587, and 588–618; these read DTCRSNFIVEDLLRRGQVSAARKVYDEMPHK, NTVSTNTMISGHVKTGDVSSARDLFDAMPDR, TVVTWTILMGWYARNSHFDEAFKLFRQMCRSSSCT, DHVTFTTLLPGCNDAVPQNAVGQVHAFAVKLGFDT, FLTVSNVLLKSYCEVRRLDLACVLFEEIPEK, DSVTFNTLITGYEKDGLYTESIHLFLKMRQSGHQP, SDFTFSGVLKAVVGLHDFALGQQLHALSVTTGFSR, DASVGNQILDFYSKHDRVLETRMLFDEMPEL, DFVSYNVVISSYSQADQYEASLHFFREMQCMGFDR, RNFPFATMLSIAANLSSLQMGRQLHCQALLATADS, ILHVGNSLVDMYAKCEMFEEAELIFKSLPQR, TTVSWTALISGYVQKGLHGAGLKLFTKMRGSNLRA, DQSTFATVLKASASFASLLLGKQLHAFIIRSGNLE, NVFSGSGLVDMYAKCGSIKDAVQVFEEMPDR, NAVSWNALISAHADNGDGEAAIGAFAKMIESGLQP, DSVSILGVLTACSHCGFVEQGTEYFQAMSPIYGITP, and KKKHYACMLDLLGRNGRFAEAEKLMDEMPFE. The interval 623–699 is type E motif; the sequence is MWSSVLNACR…VPAYSWVEVN (77 aa). Residues 700-730 are type E(+) motif; sequence HKIHVFSSNDQTHPNGDEIVRKINELTAEIE. Positions 731-825 are type DYW motif; it reads REGYKPDTSS…EGVCSCGDYW (95 aa).

The protein belongs to the PPR family. PCMP-H subfamily.

The protein is Putative pentatricopeptide repeat-containing protein At2g01510 (PCMP-H36) of Arabidopsis thaliana (Mouse-ear cress).